We begin with the raw amino-acid sequence, 228 residues long: L-ribulose-5-phosphate 4-epimerase UlaF (228 aa).

Substrate-binding positions include 26-27 (GN), 43-44 (SG), and 72-73 (SS). Positions 74, 93, and 95 each coordinate Zn(2+). Asp118 (proton donor/acceptor) is an active-site residue. Residue His167 participates in Zn(2+) binding. Tyr225 functions as the Proton donor/acceptor in the catalytic mechanism.

This sequence belongs to the aldolase class II family. AraD/FucA subfamily. The cofactor is Zn(2+).

The catalysed reaction is L-ribulose 5-phosphate = D-xylulose 5-phosphate. Its pathway is cofactor degradation; L-ascorbate degradation; D-xylulose 5-phosphate from L-ascorbate: step 4/4. In terms of biological role, catalyzes the isomerization of L-ribulose 5-phosphate to D-xylulose 5-phosphate. Is involved in the anaerobic L-ascorbate utilization. This chain is L-ribulose-5-phosphate 4-epimerase UlaF, found in Escherichia coli O17:K52:H18 (strain UMN026 / ExPEC).